The primary structure comprises 223 residues: Urease accessory protein UreF (223 aa).

Belongs to the UreF family. UreD, UreF and UreG form a complex that acts as a GTP-hydrolysis-dependent molecular chaperone, activating the urease apoprotein by helping to assemble the nickel containing metallocenter of UreC. The UreE protein probably delivers the nickel.

Its subcellular location is the cytoplasm. Required for maturation of urease via the functional incorporation of the urease nickel metallocenter. The polypeptide is Urease accessory protein UreF (Paenarthrobacter aurescens (strain TC1)).